The chain runs to 354 residues: Glycerol-1-phosphate dehydrogenase [NAD(P)+] (354 aa).

Residues 103–107 (GRSVD) and 125–128 (TAAS) each bind NAD(+). Position 130 (D130) interacts with substrate. S134 contacts NAD(+). A substrate-binding site is contributed by D176. Zn(2+) is bound by residues D176 and H255. H259 provides a ligand contact to substrate. H271 serves as a coordination point for Zn(2+).

The protein belongs to the glycerol-1-phosphate dehydrogenase family. As to quaternary structure, homodimer. Zn(2+) serves as cofactor.

The protein localises to the cytoplasm. It catalyses the reaction sn-glycerol 1-phosphate + NAD(+) = dihydroxyacetone phosphate + NADH + H(+). The enzyme catalyses sn-glycerol 1-phosphate + NADP(+) = dihydroxyacetone phosphate + NADPH + H(+). The protein operates within membrane lipid metabolism; glycerophospholipid metabolism. In terms of biological role, catalyzes the NAD(P)H-dependent reduction of dihydroxyacetonephosphate (DHAP or glycerone phosphate) to glycerol 1-phosphate (G1P). The G1P thus generated is used as the glycerophosphate backbone of phospholipids in the cellular membranes of Archaea. The chain is Glycerol-1-phosphate dehydrogenase [NAD(P)+] from Nitrosopumilus maritimus (strain SCM1).